The following is a 303-amino-acid chain: Probable acetylxylan esterase A (303 aa).

Residues 1-23 (MLSTHLLFLATTLLTSLFHPIAA) form the signal peptide. S147 acts as the Charge relay system in catalysis. The N-linked (GlcNAc...) asparagine glycan is linked to N189.

It belongs to the carbohydrate esterase 1 (CE1) family. AxeA subfamily. In terms of assembly, monomer.

It is found in the secreted. The catalysed reaction is Deacetylation of xylans and xylo-oligosaccharides.. Its pathway is glycan degradation; xylan degradation. Its function is as follows. Acetylxylan esterase involved in the hydrolysis of xylan, a major structural heterogeneous polysaccharide found in plant biomass representing the second most abundant polysaccharide in the biosphere, after cellulose. Degrades acetylated xylans by cleaving acetyl side groups from the hetero-xylan backbone. This is Probable acetylxylan esterase A (axeA) from Aspergillus niger (strain ATCC MYA-4892 / CBS 513.88 / FGSC A1513).